A 269-amino-acid polypeptide reads, in one-letter code: ParA family protein MG470 (269 aa).

The protein belongs to the ParA family.

The polypeptide is ParA family protein MG470 (Mycoplasma genitalium (strain ATCC 33530 / DSM 19775 / NCTC 10195 / G37) (Mycoplasmoides genitalium)).